Here is a 108-residue protein sequence, read N- to C-terminus: MPKKDRAQEAPSRDVPKPEEGQTICVVKKMLGGDHLVVLCMDGKERLARIPGKIRKKMWMREGDVVLVGIWDFQPNRCDILYKYGNDEIKRLVNENIISREVIDQLRG.

Residues Pro11–Gly85 form the S1-like domain.

Belongs to the eIF-1A family.

Its function is as follows. Seems to be required for maximal rate of protein biosynthesis. Enhances ribosome dissociation into subunits and stabilizes the binding of the initiator Met-tRNA(I) to 40 S ribosomal subunits. The protein is Translation initiation factor 1A (eIF1A) of Saccharolobus islandicus (strain Y.N.15.51 / Yellowstone #2) (Sulfolobus islandicus).